Reading from the N-terminus, the 482-residue chain is MTDQELGITESKEHNPGEWYAEVVQKAGLADYAPMGGFIVTRPRGYALWERLQDHLDGWFKETGVQNTYFPMFIPESYLEREKDIVDGFDPEVAWVTHGGHDELEERLAVRPTSESIITPFIAEWVRSYRDLPLRVNQWCSVVRWEATETKPFFRTKEFLWQEGHTAHATEESAWDETMTRLEQYERLYEEVMAIPGMTGRKPEHDKFPGADTTTTIEALMPDGKSVQAGTSHYLGTSFAEAFDIEYTDEDETKQTAHTTSWGLSWRALGALIMTHSDDQGLVIPPALAPTQVVVVPIWQADTEEAVKEYAADLAAELDEQFRVELDDRDERNPGFKFNEHELQGVPLRIEIGPNEVEDEAATLVHRPDGESDVAERESITDAVDEALETVYAKLYASAEATLEENIRKAHGRGEILGTLGQHGGYVKTGWCGDEACEAEIKDEIAAEIVMLPLDEDEPPVYDTCGVCGDEATETAYFAKSY.

The protein belongs to the class-II aminoacyl-tRNA synthetase family. ProS type 3 subfamily. Homodimer.

The protein localises to the cytoplasm. The enzyme catalyses tRNA(Pro) + L-proline + ATP = L-prolyl-tRNA(Pro) + AMP + diphosphate. In terms of biological role, catalyzes the attachment of proline to tRNA(Pro) in a two-step reaction: proline is first activated by ATP to form Pro-AMP and then transferred to the acceptor end of tRNA(Pro). The sequence is that of Proline--tRNA ligase from Natronomonas pharaonis (strain ATCC 35678 / DSM 2160 / CIP 103997 / JCM 8858 / NBRC 14720 / NCIMB 2260 / Gabara) (Halobacterium pharaonis).